A 479-amino-acid chain; its full sequence is MNTILAQQIASEGGVEAWMIAQQHKSLLRFLTCGSVDDGKSTLIGRLLHDTLQIYEDQLSSLHNDSKRHGTQGEKLDLALLVDGLQAEREQGITIDVAYRYFSTEKRKFIIADTPGHEQYTRNMATGASTCDLAILLIDARKGVLDQTRRHSFISTLLGIKHLVVAINKMDLVDYREETFARIREDYLTFAEQLPGDLDIRFVPLSALEGDNVAAQSANMRWYSGPTLLEVLETVDIQRAVDRQPMRFPVQYVNRPNLDFRGYAGTLASGSVKVGERIKMLPSGVESSVARIVTFDGDKEEACAGEAITLVLNDDIDISRGDLLLAANETLAPARHAAIDVVWMAEQPLAPGQSYDVKLAGKKTRARIEAICYQIDINNLTQRDVESLPLNGIGLVEMTFDEPLALDIYQQNPVTGGLIFIDRLSNVTVGAGMVRELDERGATPPVEYSAFELELNALVRRHFPHWDARDLLGDKHGAA.

Residues 25 to 239 (KSLLRFLTCG…EVLETVDIQR (215 aa)) form the tr-type G domain. Residues 34 to 41 (GSVDDGKS) form a G1 region. Residue 34–41 (GSVDDGKS) coordinates GTP. The segment at 92-96 (GITID) is G2. Positions 113-116 (DTPG) are G3. Residues 113–117 (DTPGH) and 168–171 (NKMD) each bind GTP. Positions 168-171 (NKMD) are G4. The interval 206–208 (SAL) is G5.

Belongs to the TRAFAC class translation factor GTPase superfamily. Classic translation factor GTPase family. CysN/NodQ subfamily. As to quaternary structure, heterodimer composed of CysD, the smaller subunit, and CysN.

The catalysed reaction is sulfate + ATP + H(+) = adenosine 5'-phosphosulfate + diphosphate. The protein operates within sulfur metabolism; hydrogen sulfide biosynthesis; sulfite from sulfate: step 1/3. In terms of biological role, with CysD forms the ATP sulfurylase (ATPS) that catalyzes the adenylation of sulfate producing adenosine 5'-phosphosulfate (APS) and diphosphate, the first enzymatic step in sulfur assimilation pathway. APS synthesis involves the formation of a high-energy phosphoric-sulfuric acid anhydride bond driven by GTP hydrolysis by CysN coupled to ATP hydrolysis by CysD. This is Sulfate adenylyltransferase subunit 1 from Salmonella paratyphi A (strain ATCC 9150 / SARB42).